A 340-amino-acid chain; its full sequence is MSTMNVLICQQPKELVWKQREIPIPGDNEALIKIKSVGICGTDIHAWGGNQPFFSYPRVLGHEICGEIVGLGKNIADLKNGQQVAVIPYVACQQCPACKSGRTNCCEKISVIGVHQDGGFSEYLSVPVANILPADGIDPQAAALIEPFAISAHAVRRAAIAPGEQVLVVGAGPIGLGAAAIAKADGAQVVVADTSPARREHVATRLELPLLDPSAEDFDAQLRAQFGGSLAQKVIDATGNQHAMNNTVNLIRHGGTVVFVGLFKGELQFSDPEFHKKETTMMGSRNATPEDFAKVGRLMAEGKITADMMLTHRYPFATLAETYERDVINNRELIKGVITF.

Positions 40, 65, 92, 95, 98, 106, and 146 each coordinate Zn(2+).

The protein belongs to the zinc-containing alcohol dehydrogenase family. The cofactor is Zn(2+).

The catalysed reaction is L-galactonate + NAD(+) = keto-D-tagaturonate + NADH + H(+). Its activity is regulated as follows. Inhibited by EDTA. Functionally, catalyzes the oxidation of L-galactonate to D-tagaturonate. Required for growth on L-galactonate as the sole carbon source. In vitro, can also use L-gulonate. This is L-galactonate-5-dehydrogenase (lgoD) from Escherichia coli (strain K12).